The following is a 94-amino-acid chain: Large ribosomal subunit protein uL23 (94 aa).

It belongs to the universal ribosomal protein uL23 family. As to quaternary structure, part of the 50S ribosomal subunit. Contacts protein L29, and trigger factor when it is bound to the ribosome.

Its function is as follows. One of the early assembly proteins it binds 23S rRNA. One of the proteins that surrounds the polypeptide exit tunnel on the outside of the ribosome. Forms the main docking site for trigger factor binding to the ribosome. The sequence is that of Large ribosomal subunit protein uL23 from Roseiflexus sp. (strain RS-1).